The following is a 591-amino-acid chain: ESX-1 secretion system protein EccCb1 (591 aa).

2 FtsK domains span residues 65 to 259 (LQDV…NETQ) and 359 to 545 (LTPA…EKQE). Residues 84–91 (GAPQTGKS) and 376–383 (GAAKSGKT) each bind ATP.

Part of the ESX-1 / type VII secretion system (T7SS), which is composed of cytosolic and membrane components. The ESX-1 membrane complex is composed of EccB1, EccCa1, EccCb1, EccD1 and EccE1. Interacts with EccCa1, EspK and the C-terminus of EsxB. Residues 1-261 interact with EsxB and an artificial EsxB-EsxA heterodimer.

The protein resides in the cytoplasm. EsxB binding to the second FtsK domain of EccCb1 causes multimerization; a subsequent unknown step relieves the allosteric inhibition of linker 2 on FtsK domain 1 (in EccCa1 subunit), activating the ATPase activity. In terms of biological role, part of the ESX-1 specialized secretion system, which delivers several virulence factors to host cells during infection, including the key virulence factors EsxA (ESAT-6) and EsxB (CFP-10). EccCb1 may link the cytosolic components of the system with the membrane components. In Mycobacterium tuberculosis (strain ATCC 25618 / H37Rv), this protein is ESX-1 secretion system protein EccCb1.